The primary structure comprises 786 residues: Diamine oxidase [copper-containing] 1, peroxisomal (786 aa).

419 to 430 (AFDAGEDGLGKN) contributes to the substrate binding site. Asp-421 (proton acceptor) is an active-site residue. The cysteines at positions 440 and 466 are disulfide-linked. Residue 502–507 (VANYEY) coordinates substrate. Tyr-505 functions as the Schiff-base intermediate with substrate; via topaquinone in the catalytic mechanism. Residue Tyr-505 is modified to 2',4',5'-topaquinone. Residues His-555 and His-557 each coordinate Cu cation. 2 residues coordinate Mn(2+): Asp-710 and Ile-711. His-721 provides a ligand contact to Cu cation.

The protein belongs to the copper/topaquinone oxidase family. As to quaternary structure, homodimer. The cofactor is Cu cation. Zn(2+) is required as a cofactor. It depends on L-topaquinone as a cofactor. In terms of processing, topaquinone (TPQ) is generated by copper-dependent autoxidation of a specific tyrosyl residue. As to expression, mainly expressed in roots, and, to a lower extent, in leaves and stems.

It is found in the peroxisome. The enzyme catalyses a primary methyl amine + O2 + H2O = an aldehyde + H2O2 + NH4(+). The catalysed reaction is N-methylputrescine + O2 + H2O = 4-methylaminobutanal + H2O2 + NH4(+). It participates in alkaloid biosynthesis; nicotine biosynthesis. The protein operates within amine and polyamine degradation; putrescine degradation. Involved in putrescine catabolism in peroxisomes. May also be involved in the biosynthesis of pyridine alkaloid natural products, leading mainly to the production of anabasine, anatabine, nicotine and nornicotine, effective deterrents against herbivores with antiparasitic and pesticide properties (neurotoxins); nornicotine serves as the precursor in the synthesis of the carcinogen compound N'-nitrosonornicotine (NNN). Oxidizes preferentially non-N-methylated amines. The polypeptide is Diamine oxidase [copper-containing] 1, peroxisomal (Nicotiana tabacum (Common tobacco)).